A 126-amino-acid polypeptide reads, in one-letter code: Adenosine 5'-monophosphoramidase HINT1 (126 aa).

The residue at position 2 (Ala-2) is an N-acetylalanine. An HIT domain is found at 18-126 (IFGKIIRKEI…GGRQMNWPPG (109 aa)). N6-acetyllysine is present on residues Lys-21 and Lys-30. 43–44 (DI) is a binding site for AMP. 2 positions are modified to phosphoserine: Ser-45 and Ser-72. Residues Asn-99, 105 to 107 (GQS), and 112 to 114 (HLH) each bind AMP. A Histidine triad motif motif is present at residues 110-114 (HVHLH). Catalysis depends on His-112, which acts as the Tele-AMP-histidine intermediate.

It belongs to the HINT family. As to quaternary structure, homodimer. Interacts with CDK7. Interacts with RUVBL1 and RUVBL2 and is associated with the LEF1/TCF1-CTNNB1 complex and with a KAT5 histone acetyltransferase complex. Identified in a complex with MITF and CTNNB1. Interacts with CDC34 and RBX1, and is part of a SCF (SKP2-CUL1-F-box protein) E3 ubiquitin-protein ligase complex. Interacts with SUMO1, SUMO2 and RGS17. Interacts with the Ten-1 ICD form of TENM1. Interacts with CALM1; interaction increases in the presence of calcium ions. In terms of tissue distribution, widely expressed.

It is found in the cytoplasm. It localises to the nucleus. It carries out the reaction adenosine 5'-phosphoramidate + H2O = AMP + NH4(+). Functionally, exhibits adenosine 5'-monophosphoramidase activity, hydrolyzing purine nucleotide phosphoramidates with a single phosphate group such as adenosine 5'monophosphoramidate (AMP-NH2) to yield AMP and NH2. Hydrolyzes adenosine 5'monophosphomorpholidate (AMP-morpholidate) and guanosine 5'monophosphomorpholidate (GMP-morpholidate). Hydrolyzes lysyl-AMP (AMP-N-epsilon-(N-alpha-acetyl lysine methyl ester)) generated by lysine tRNA ligase, as well as Met-AMP, His-AMP and Asp-AMP, lysyl-GMP (GMP-N-epsilon-(N-alpha-acetyl lysine methyl ester)) and AMP-N-alanine methyl ester. Can also convert adenosine 5'-O-phosphorothioate and guanosine 5'-O-phosphorothioate to the corresponding nucleoside 5'-O-phosphates with concomitant release of hydrogen sulfide. In addition, functions as a scaffolding protein that modulates transcriptional activation by the LEF1/TCF1-CTNNB1 complex and by the complex formed with MITF and CTNNB1. Modulates p53/TP53 levels and p53/TP53-mediated apoptosis. Modulates proteasomal degradation of target proteins by the SCF (SKP2-CUL1-F-box protein) E3 ubiquitin-protein ligase complex. Also exhibits SUMO-specific isopeptidase activity, deconjugating SUMO1 from RANGAP1 and RGS17. The sequence is that of Adenosine 5'-monophosphoramidase HINT1 (HINT1) from Bos taurus (Bovine).